The chain runs to 260 residues: Snake venom serine protease homolog 1 (260 aa).

A signal peptide spans 1 to 18 (MVLIRVLANLLLLQLSYA). A propeptide spanning residues 19–24 (QESSEL) is cleaved from the precursor. A Peptidase S1 domain is found at 25–251 (VIGGDECDIN…YTDWIEGIIA (227 aa)). 6 cysteine pairs are disulfide-bonded: Cys-31-Cys-165, Cys-52-Cys-68, Cys-100-Cys-258, Cys-144-Cys-212, Cys-176-Cys-191, and Cys-202-Cys-227. N-linked (GlcNAc...) asparagine glycosylation is present at Asn-253.

Belongs to the peptidase S1 family. Snake venom subfamily. As to expression, expressed by the venom gland.

The protein localises to the secreted. Its function is as follows. Snake venom serine protease homolog that may act in the hemostasis system of the prey. The protein is Snake venom serine protease homolog 1 of Bitis gabonica (Gaboon adder).